The primary structure comprises 179 residues: Large ribosomal subunit protein uL5 (179 aa).

Belongs to the universal ribosomal protein uL5 family. Part of the 50S ribosomal subunit; part of the 5S rRNA/L5/L18/L25 subcomplex. Contacts the 5S rRNA and the P site tRNA. Forms a bridge to the 30S subunit in the 70S ribosome.

Functionally, this is one of the proteins that bind and probably mediate the attachment of the 5S RNA into the large ribosomal subunit, where it forms part of the central protuberance. In the 70S ribosome it contacts protein S13 of the 30S subunit (bridge B1b), connecting the 2 subunits; this bridge is implicated in subunit movement. Contacts the P site tRNA; the 5S rRNA and some of its associated proteins might help stabilize positioning of ribosome-bound tRNAs. The chain is Large ribosomal subunit protein uL5 from Pectobacterium atrosepticum (strain SCRI 1043 / ATCC BAA-672) (Erwinia carotovora subsp. atroseptica).